The following is a 177-amino-acid chain: Disulfide bond formation protein B (177 aa).

Over 1-14 (MMVWNWIDRTPRRV) the chain is Cytoplasmic. The chain crosses the membrane as a helical span at residues 15–31 (LALISLACVALLACGLY). Residues 32–49 (LQHVVGLVPCPMCIVQRY) are Periplasmic-facing. Cysteine 41 and cysteine 44 are joined by a disulfide. The chain crosses the membrane as a helical span at residues 50 to 64 (ALIGLALLTGLASAR). The Cytoplasmic segment spans residues 65–70 (SAKGWW). Residues 71 to 89 (LTLSALAALTAGFGATVAA) traverse the membrane as a helical segment. Over 90-145 (RQSWLQWYPPQSVSCGRDFYGMIESFPLSRAIPMILRGSGDCAAVDWSLLGGSIAN) the chain is Periplasmic. Cysteine 104 and cysteine 131 are disulfide-bonded. A helical transmembrane segment spans residues 146–164 (WSFLCFALLGLLLLALLAR). Topologically, residues 165 to 177 (GVRGARQRAPAPV) are cytoplasmic.

It belongs to the DsbB family.

The protein localises to the cell inner membrane. Functionally, required for disulfide bond formation in some periplasmic proteins. Acts by oxidizing the DsbA protein. In Verminephrobacter eiseniae (strain EF01-2), this protein is Disulfide bond formation protein B.